The sequence spans 331 residues: Ketol-acid reductoisomerase (NADP(+)) (331 aa).

The 181-residue stretch at 2–182 (AQLFYDTDAD…GGTRAGILET (181 aa)) folds into the KARI N-terminal Rossmann domain. NADP(+)-binding positions include 25–28 (YGSQ), Ser-51, Ser-53, and 83–86 (DEFQ). His-108 is an active-site residue. An NADP(+)-binding site is contributed by Gly-134. The KARI C-terminal knotted domain occupies 183–328 (NFKEETETDL…KGLRSMFSWL (146 aa)). Mg(2+) is bound by residues Asp-191, Glu-195, Glu-227, and Glu-231. Position 252 (Ser-252) interacts with substrate.

It belongs to the ketol-acid reductoisomerase family. It depends on Mg(2+) as a cofactor.

It catalyses the reaction (2R)-2,3-dihydroxy-3-methylbutanoate + NADP(+) = (2S)-2-acetolactate + NADPH + H(+). It carries out the reaction (2R,3R)-2,3-dihydroxy-3-methylpentanoate + NADP(+) = (S)-2-ethyl-2-hydroxy-3-oxobutanoate + NADPH + H(+). It functions in the pathway amino-acid biosynthesis; L-isoleucine biosynthesis; L-isoleucine from 2-oxobutanoate: step 2/4. The protein operates within amino-acid biosynthesis; L-valine biosynthesis; L-valine from pyruvate: step 2/4. Involved in the biosynthesis of branched-chain amino acids (BCAA). Catalyzes an alkyl-migration followed by a ketol-acid reduction of (S)-2-acetolactate (S2AL) to yield (R)-2,3-dihydroxy-isovalerate. In the isomerase reaction, S2AL is rearranged via a Mg-dependent methyl migration to produce 3-hydroxy-3-methyl-2-ketobutyrate (HMKB). In the reductase reaction, this 2-ketoacid undergoes a metal-dependent reduction by NADPH to yield (R)-2,3-dihydroxy-isovalerate. The polypeptide is Ketol-acid reductoisomerase (NADP(+)) (Synechococcus sp. (strain WH7803)).